We begin with the raw amino-acid sequence, 72 residues long: Translation initiation factor IF-1 (72 aa).

The region spanning 1-72 (MAKEDCIEMQ…SKARIIFRAR (72 aa)) is the S1-like domain.

The protein belongs to the IF-1 family. In terms of assembly, component of the 30S ribosomal translation pre-initiation complex which assembles on the 30S ribosome in the order IF-2 and IF-3, IF-1 and N-formylmethionyl-tRNA(fMet); mRNA recruitment can occur at any time during PIC assembly.

It localises to the cytoplasm. In terms of biological role, one of the essential components for the initiation of protein synthesis. Stabilizes the binding of IF-2 and IF-3 on the 30S subunit to which N-formylmethionyl-tRNA(fMet) subsequently binds. Helps modulate mRNA selection, yielding the 30S pre-initiation complex (PIC). Upon addition of the 50S ribosomal subunit IF-1, IF-2 and IF-3 are released leaving the mature 70S translation initiation complex. The polypeptide is Translation initiation factor IF-1 (Actinobacillus pleuropneumoniae serotype 5b (strain L20)).